A 350-amino-acid polypeptide reads, in one-letter code: WUSCHEL-related homeobox 1 (350 aa).

The homeobox; WUS-type DNA-binding region spans 72–136; the sequence is MVSSRWNPTP…NHKARERQKR (65 aa). The interval 283-308 is disordered; that stretch reads TNTETCHRNGDDNKDQEQHEDCSNGE.

This sequence belongs to the WUS homeobox family.

The protein localises to the nucleus. In terms of biological role, transcription factor which may be involved in developmental processes. The sequence is that of WUSCHEL-related homeobox 1 (WOX1) from Arabidopsis thaliana (Mouse-ear cress).